A 382-amino-acid polypeptide reads, in one-letter code: Gap junction alpha-1 protein (382 aa).

The Cytoplasmic segment spans residues Gly2–Lys23. Ser5 is subject to Phosphoserine. Residues Val24–Ala44 traverse the membrane as a helical segment. Over Trp45–Arg76 the chain is Extracellular. 2 disulfides stabilise this stretch: Cys54–Cys192 and Cys187–Cys198. Residues Phe77–Phe97 form a helical membrane-spanning segment. The Cytoplasmic portion of the chain corresponds to Tyr98 to Tyr155. Residue Lys144 forms a Glycyl lysine isopeptide (Lys-Gly) (interchain with G-Cter in SUMO) linkage. A helical membrane pass occupies residues Ile156 to Ile176. Over Tyr177 to Thr207 the chain is Extracellular. The chain crosses the membrane as a helical span at residues Ile208–Leu228. At Phe229–Ile382 the chain is on the cytoplasmic side. A Glycyl lysine isopeptide (Lys-Gly) (interchain with G-Cter in SUMO) cross-link involves residue Lys237. The segment at Ser244–Ile382 is interaction with NOV. Tyr247 bears the Phosphotyrosine mark. Phosphoserine occurs at positions 255, 257, and 262. Residues Lys264–Ile382 are interaction with UBQLN4. Position 271 is an S-nitrosocysteine (Cys271). Thr275 bears the Phosphothreonine mark. Ser306 and Ser314 each carry phosphoserine. Residues Gln317–Ala332 are compositionally biased toward polar residues. Positions Gln317–Ile382 are disordered. Ser325 bears the Phosphoserine; by CK1 mark. Thr326 carries the post-translational modification Phosphothreonine. Phosphoserine; by CK1 occurs at positions 328 and 330. 2 positions are modified to phosphoserine: Ser344 and Ser365. The span at Arg362–Arg374 shows a compositional bias: low complexity. Ser368 is modified (phosphoserine; by PKC/PRKCG and PKC/PRKCD). Residues Ser369 and Ser373 each carry the phosphoserine modification.

This sequence belongs to the connexin family. Alpha-type (group II) subfamily. In terms of assembly, a connexon is composed of a hexamer of connexins. Interacts with SGSM3. Interacts with RIC1/CIP150. Interacts with CNST and CSNK1D. Interacts (via C-terminus) with TJP1. Interacts (via C-terminus) with SRC (via SH3 domain). Interacts (not ubiquitinated) with UBQLN4 (via UBA domain). Interacts with NOV. Interacts with TMEM65. Interacts with ANK3/ANKG and PKP2. In terms of processing, phosphorylation at Ser-325, Ser-328 and Ser-330 by CK1 modulates gap junction assembly. Phosphorylated at Ser-368 by PRKCG; phosphorylation induces disassembly of gap junction plaques and inhibition of gap junction activity. Phosphorylation at Ser-368 by PRKCD triggers its internalization into small vesicles leading to proteasome-mediated degradation. Post-translationally, sumoylated with SUMO1, SUMO2 and SUMO3, which may regulate the level of functional Cx43 gap junctions at the plasma membrane. May be desumoylated by SENP1 or SENP2. S-nitrosylation at Cys-271 is enriched at the muscle endothelial gap junction in arteries, it augments channel permeability and may regulate of smooth muscle cell to endothelial cell communication. In terms of processing, acetylated in the developing cortex; leading to delocalization from the cell membrane.

The protein resides in the cell membrane. The protein localises to the cell junction. It localises to the gap junction. It is found in the endoplasmic reticulum. Functionally, gap junction protein that acts as a regulator of bladder capacity. A gap junction consists of a cluster of closely packed pairs of transmembrane channels, the connexons, through which materials of low MW diffuse from one cell to a neighboring cell. May play a critical role in the physiology of hearing by participating in the recycling of potassium to the cochlear endolymph. Negative regulator of bladder functional capacity: acts by enhancing intercellular electrical and chemical transmission, thus sensitizing bladder muscles to cholinergic neural stimuli and causing them to contract. May play a role in cell growth inhibition through the regulation of NOV expression and localization. Plays an essential role in gap junction communication in the ventricles. This Ursus americanus (American black bear) protein is Gap junction alpha-1 protein (GJA1).